Reading from the N-terminus, the 235-residue chain is High affinity immunoglobulin epsilon receptor subunit beta (235 aa).

Positions 1–23 are disordered; it reads MDTENRSRADLALPNPQESSSAP. At 1-51 the chain is on the cytoplasmic side; that stretch reads MDTENRSRADLALPNPQESSSAPDIELLEASPAKAAPPKQTWRTFLKKELE. A helical membrane pass occupies residues 52–71; it reads FLGATQILVGLICLCFGTIV. Over 72–89 the chain is Extracellular; sequence CSVLYVSDFDEEVLLLYK. The chain crosses the membrane as a helical span at residues 90–109; sequence LGYPFWGAVLFVLSGFLSII. Residues 110 to 122 are Cytoplasmic-facing; the sequence is SERKNTLYLVRGS. The helical transmembrane segment at 123–142 threads the bilayer; sequence LGANIVSSIAAGTGIAMLIL. The Extracellular portion of the chain corresponds to 143–171; that stretch reads NLTNNFAYMNNCKNVTEDDGCFVASFTTE. A helical transmembrane segment spans residues 172-191; the sequence is LVLMMLFLTILAFCSAVLFT. The Cytoplasmic portion of the chain corresponds to 192–235; it reads IYRIGQELESKKVPDDRLYEELNVYSPIYSELEDKGETSSPVDS. Phosphotyrosine is present on residues Y210 and Y216. A Phosphoserine modification is found at S217. Y220 carries the phosphotyrosine modification.

It belongs to the MS4A family. In terms of assembly, tetramer of an alpha chain, a beta chain, and two disulfide linked gamma chains. Binds LILRB1. Interacts with FGR. Interacts with FGR and FES/FPS. Interacts with LYN. Post-translationally, phosphorylated on tyrosine residues by LYN.

The protein resides in the membrane. High affinity receptor that binds to the Fc region of immunoglobulins epsilon. Aggregation of FCER1 by multivalent antigens is required for the full mast cell response, including the release of preformed mediators (such as histamine) by degranulation and de novo production of lipid mediators and cytokines. Also mediates the secretion of important lymphokines. Binding of allergen to receptor-bound IgE leads to cell activation and the release of mediators responsible for the manifestations of allergy. The polypeptide is High affinity immunoglobulin epsilon receptor subunit beta (Ms4a2) (Mus musculus (Mouse)).